The primary structure comprises 324 residues: Glycerol-3-phosphate dehydrogenase [NAD(P)+] (324 aa).

Residues W15, R35, and K101 each contribute to the NADPH site. Sn-glycerol 3-phosphate is bound by residues K101 and G129. NADPH is bound at residue A133. 5 residues coordinate sn-glycerol 3-phosphate: K184, D237, S247, R248, and N249. Residue K184 is the Proton acceptor of the active site. R248 is a binding site for NADPH. NADPH contacts are provided by V272 and E274.

This sequence belongs to the NAD-dependent glycerol-3-phosphate dehydrogenase family.

The protein localises to the cytoplasm. It catalyses the reaction sn-glycerol 3-phosphate + NAD(+) = dihydroxyacetone phosphate + NADH + H(+). It carries out the reaction sn-glycerol 3-phosphate + NADP(+) = dihydroxyacetone phosphate + NADPH + H(+). The protein operates within membrane lipid metabolism; glycerophospholipid metabolism. Catalyzes the reduction of the glycolytic intermediate dihydroxyacetone phosphate (DHAP) to sn-glycerol 3-phosphate (G3P), the key precursor for phospholipid synthesis. In Gluconobacter oxydans (strain 621H) (Gluconobacter suboxydans), this protein is Glycerol-3-phosphate dehydrogenase [NAD(P)+].